We begin with the raw amino-acid sequence, 121 residues long: Probable K(+)/H(+) antiporter subunit G (121 aa).

Transmembrane regions (helical) follow at residues 10 to 32 (WAAL…GSLG), 45 to 67 (APTI…CFAV), and 72 to 94 (WVFH…LMLL).

This sequence belongs to the CPA3 antiporters (TC 2.A.63) subunit G family. In terms of assembly, may form a hetero-oligomeric complex that consists of six subunits: PhaAB, PhaC, PhaD, PhaE, PhaF and PhaG.

It localises to the cell membrane. Its function is as follows. Part of a K(+) efflux system which is required for the adaptation of R.meliloti to alkaline pH as well as for the infection process during symbiotic nodule development. The protein is Probable K(+)/H(+) antiporter subunit G (phaG) of Rhizobium meliloti (strain 1021) (Ensifer meliloti).